The chain runs to 858 residues: Beta-galactosidase 6 (858 aa).

The signal sequence occupies residues 1–30 (MAAATVGVLLRLLLLPVVVVVSLLVGASRA). N32 carries N-linked (GlcNAc...) asparagine glycosylation. E189 serves as the catalytic Proton donor. Catalysis depends on E258, which acts as the Nucleophile. N259, N482, N507, N595, and N830 each carry an N-linked (GlcNAc...) asparagine glycan. An SUEL-type lectin domain is found at 772-858 (QTQGPALRLE…KSLVVEAACS (87 aa)).

Belongs to the glycosyl hydrolase 35 family.

It is found in the secreted. Its subcellular location is the extracellular space. The protein resides in the apoplast. The enzyme catalyses Hydrolysis of terminal non-reducing beta-D-galactose residues in beta-D-galactosides.. In terms of biological role, releases galactose by hydrolysis of plant cell wall galactose-containing polysaccharides such as galacto-xyloglucan, pectic galactan and galactan (in vitro). This chain is Beta-galactosidase 6, found in Oryza sativa subsp. japonica (Rice).